Consider the following 64-residue polypeptide: Putative antitoxin VapB51 (64 aa).

Functionally, possibly the antitoxin component of a type II toxin-antitoxin (TA) system. Its cognate toxin is VapC51. In Mycobacterium tuberculosis (strain ATCC 25618 / H37Rv), this protein is Putative antitoxin VapB51.